The following is a 289-amino-acid chain: Glycine-rich RNA-binding protein 5, mitochondrial (289 aa).

The transit peptide at 1-31 directs the protein to the mitochondrion; the sequence is MAFLSKVGRLFSQTSSHVTASSSMLQSIRCM. One can recognise an RRM domain in the interval 34 to 111; sequence SKIFVGGISY…RRIRVNYATE (78 aa). Residues 219–289 are disordered; sequence QGSSTNAGFD…TDDGDVAKRA (71 aa). Positions 257 to 272 are enriched in polar residues; the sequence is GSDNQFGDAENGNTEN.

This sequence belongs to the GR-RBP family. As to quaternary structure, homodimer. Interacts with MORF8/RIP1 AND RBG3/ORRM3. Binds to RBG2/ORRM5.

The protein resides in the mitochondrion. Functionally, possibly has a role in RNA transcription or processing during stress. Binds RNAs and DNAs sequence with a preference to single-stranded nucleic acids. Displays strong affinity to poly(U) sequence. Involved in C-to-U editing of mitochondrial RNA. Functions as a major mitochondrial editing factor. Controls 44 percent of the mitochondrial editing sites. The polypeptide is Glycine-rich RNA-binding protein 5, mitochondrial (Arabidopsis thaliana (Mouse-ear cress)).